A 163-amino-acid polypeptide reads, in one-letter code: MPSFDVVNKVEMQELDNAVNNVKKEVDTRYDFRNSVTEIELHRGDKRIHLLAGDEMKMRALQDMLQSHCIRRKVDPKCLEFKDIEPTSKGQVKRDVVIQEGITKDVAQKIVKKIKDSKLKVQAAIQDDQVRVTGKKIDDLQEVIQLLRGEEFGVPLQFVNMKA.

Belongs to the YajQ family.

In terms of biological role, nucleotide-binding protein. The protein is Nucleotide-binding protein DvMF_3058 of Nitratidesulfovibrio vulgaris (strain DSM 19637 / Miyazaki F) (Desulfovibrio vulgaris).